Reading from the N-terminus, the 826-residue chain is G-protein coupled receptor-associated sorting protein 2 (826 aa).

Disordered regions lie at residues 1 to 126 (MTGA…AQAW), 204 to 286 (WCYP…NPFC), 336 to 371 (EGNR…QESR), and 506 to 534 (IPEG…DSVA). The span at 13–31 (KPDKKPQEEVAGGAERESE) shows a compositional bias: basic and acidic residues. Over residues 59–73 (SSRARPKTETQSVSG) the composition is skewed to polar residues. Residues 231 to 247 (TREETSIRSWPREEVNT) are compositionally biased toward basic and acidic residues. Basic residues predominate over residues 248–264 (RSRHRAKHQTNARSKPR). Phosphoserine occurs at positions 275 and 277.

This sequence belongs to the GPRASP family. Interacts with cytoplasmic tails of a variety of G-protein coupled receptors such as muscarinic acetylcholine receptor M1/CHRM1 and calcitonin receptor/CALCR. As to expression, strongly expressed in the brain and the cochlea. Also in lung and muscle tissues. Localized in multiple structures of the cochlea, detected in the spiral ganglion, stria vascularis, spiral ligament, inner and outer hair cells.

Functionally, may play a role in regulation of a variety of G-protein coupled receptors. The sequence is that of G-protein coupled receptor-associated sorting protein 2 (Gprasp2) from Mus musculus (Mouse).